The chain runs to 412 residues: Dihydrolipoyllysine-residue acetyltransferase component of pyruvate dehydrogenase complex (412 aa).

Residues 2–78 (PIKILMPALS…PVNSLIAVLS (77 aa)) enclose the Lipoyl-binding domain. The residue at position 43 (Lys-43) is an N6-lipoyllysine. Residues 132–169 (FASPLAKRLAKMRNIRFESVKGSGPHGRIVKQDILSYT) form the Peripheral subunit-binding (PSBD) domain. The active site involves His-385.

The protein belongs to the 2-oxoacid dehydrogenase family. In terms of assembly, forms a 24-polypeptide structural core with octahedral symmetry. It depends on (R)-lipoate as a cofactor.

It catalyses the reaction N(6)-[(R)-dihydrolipoyl]-L-lysyl-[protein] + acetyl-CoA = N(6)-[(R)-S(8)-acetyldihydrolipoyl]-L-lysyl-[protein] + CoA. Functionally, the pyruvate dehydrogenase complex catalyzes the overall conversion of pyruvate to acetyl-CoA and CO(2). It contains multiple copies of three enzymatic components: pyruvate dehydrogenase (E1), dihydrolipoamide acetyltransferase (E2) and lipoamide dehydrogenase (E3). This is Dihydrolipoyllysine-residue acetyltransferase component of pyruvate dehydrogenase complex (pdhC) from Rickettsia conorii (strain ATCC VR-613 / Malish 7).